The chain runs to 131 residues: mRNA stability protein IGO2 (131 aa).

Positions 1 to 13 (MSEDLSPTSSRVD) are enriched in polar residues. The disordered stretch occupies residues 1 to 26 (MSEDLSPTSSRVDLSNPHGFTKEGVD). At serine 2 the chain carries N-acetylserine. Residues serine 6, serine 63, serine 108, and serine 119 each carry the phosphoserine modification. The tract at residues 81 to 131 (VNNSSNNLPVTNPSGLRESIIRRRMSSSSGGDSISRQGSISSGPPPRSPNK) is disordered. Low complexity predominate over residues 106–122 (SSSSGGDSISRQGSISS).

Belongs to the endosulfine family. Post-translationally, phosphorylated by RIM15.

Its subcellular location is the cytoplasm. The protein localises to the nucleus. Functionally, required for TORC1 to properly control gene expression and chronological life span. Plays an essential role in initiation of the G0 program by preventing the degradation of specific nutrient-regulated mRNAs via the 5'-3' mRNA decay pathway. The chain is mRNA stability protein IGO2 (IGO2) from Saccharomyces cerevisiae (strain ATCC 204508 / S288c) (Baker's yeast).